Consider the following 1374-residue polypeptide: L-2-aminoadipate reductase large subunit (1374 aa).

Residues 828–905 (SEFNQQEREI…AFAAEVSRLK (78 aa)) enclose the Carrier domain. Serine 865 carries the post-translational modification O-(pantetheine 4'-phosphoryl)serine.

Belongs to the ATP-dependent AMP-binding enzyme family. As to quaternary structure, heterodimer of an alpha and a beta subunit. Pantetheine 4'-phosphate serves as cofactor.

It carries out the reaction (S)-2-amino-6-oxohexanoate + NADP(+) + H2O = L-2-aminoadipate + NADPH + 2 H(+). The catalysed reaction is (S)-2-amino-6-oxohexanoate + NAD(+) + H2O = L-2-aminoadipate + NADH + 2 H(+). The enzyme catalyses (S)-2-amino-6-oxohexanoate + AMP + diphosphate + NADP(+) = L-2-aminoadipate + ATP + NADPH + H(+). Its pathway is amino-acid biosynthesis; L-lysine biosynthesis via AAA pathway; L-lysine from L-alpha-aminoadipate (fungal route): step 1/3. Catalyzes the activation of alpha-aminoadipate by ATP-dependent adenylation and the reduction of activated alpha-aminoadipate by NADPH. The activated alpha-aminoadipate is bound to the phosphopantheinyl group of the enzyme itself before it is reduced to (S)-2-amino-6-oxohexanoate. In Candida glabrata (strain ATCC 2001 / BCRC 20586 / JCM 3761 / NBRC 0622 / NRRL Y-65 / CBS 138) (Yeast), this protein is L-2-aminoadipate reductase large subunit (LYS2).